Reading from the N-terminus, the 423-residue chain is Galactosylceramide sulfotransferase (423 aa).

At Met1–Lys14 the chain is on the cytoplasmic side. A helical; Signal-anchor for type II membrane protein transmembrane segment spans residues Gly15–Pro35. Topologically, residues Pro36–Trp423 are lumenal. A disordered region spans residues Gly48–Gly70. Residues Asn66, Asn156, and Asn312 are each glycosylated (N-linked (GlcNAc...) asparagine).

This sequence belongs to the galactose-3-O-sulfotransferase family.

It localises to the golgi apparatus membrane. It catalyses the reaction a beta-D-galactosyl-(1&lt;-&gt;1')-N-acylsphing-4-enine + 3'-phosphoadenylyl sulfate = an N-acyl-1-beta-D-(3-O-sulfo)-galactosyl-sphing-4-enine + adenosine 3',5'-bisphosphate + H(+). It carries out the reaction a 1-O-alkyl-2-acyl-3-O-(beta-D-galactosyl)-sn-glycerol + 3'-phosphoadenylyl sulfate = a 1-O-alkyl-2-acyl-3-(beta-D-3-sulfogalactosyl)-sn-glycerol + adenosine 3',5'-bisphosphate + H(+). The enzyme catalyses a beta-D-Gal-(1&lt;-&gt;1')-ceramide + 3'-phosphoadenylyl sulfate = 1-(3-O-sulfo-beta-D-galactosyl)-ceramide + adenosine 3',5'-bisphosphate + H(+). The catalysed reaction is a 1,2-diacyl-3-O-(beta-D-galactosyl)-sn-glycerol + 3'-phosphoadenylyl sulfate = 1,2-diacyl-3-(3-O-sulfo-beta-D-galactosyl)-sn-glycerol + adenosine 3',5'-bisphosphate + H(+). It catalyses the reaction a beta-D-Gal-(1-&gt;4)-beta-D-Glc-(1&lt;-&gt;1)-Cer(d18:1(4E)) + 3'-phosphoadenylyl sulfate = beta-D-3-sulfogalactosyl-(1-&gt;4)-beta-D-glucosyl-(1&lt;-&gt;1')-N-acylsphing-4-enine + adenosine 3',5'-bisphosphate + H(+). Its pathway is lipid metabolism; sphingolipid metabolism. In terms of biological role, catalyzes the transfer of a sulfate group to position 3 of non-reducing beta-galactosyl residues in glycerolipids and sphingolipids, therefore participates in the biosynthesis of sulfoglycolipids. Catalyzes the synthesis of galactosylceramide sulfate (sulfatide), a major lipid component of the myelin sheath and of monogalactosylalkylacylglycerol sulfate (seminolipid), present in spermatocytes. Seems to prefer beta-glycosides at the non-reducing termini of sugar chains attached to a lipid moiety. Also acts on lactosylceramide, galactosyl 1-alkyl-2-sn-glycerol and galactosyl diacylglycerol (in vitro). The sequence is that of Galactosylceramide sulfotransferase from Bos taurus (Bovine).